The primary structure comprises 154 residues: Peptide deformylase (154 aa).

Residues Cys90 and His132 each coordinate Fe cation. The active site involves Glu133. His136 is a Fe cation binding site.

Belongs to the polypeptide deformylase family. Requires Fe(2+) as cofactor.

The enzyme catalyses N-terminal N-formyl-L-methionyl-[peptide] + H2O = N-terminal L-methionyl-[peptide] + formate. Its function is as follows. Removes the formyl group from the N-terminal Met of newly synthesized proteins. Requires at least a dipeptide for an efficient rate of reaction. N-terminal L-methionine is a prerequisite for activity but the enzyme has broad specificity at other positions. This is Peptide deformylase from Halothermothrix orenii (strain H 168 / OCM 544 / DSM 9562).